An 857-amino-acid chain; its full sequence is MASPAPAFSLANLLNGSYGVDTPEDVERLRSEQREEAAAACRNYRPLPAVDVSESVTEDAHSLRTPDGAPAEAVSDEFVTYGAEDYLEKSDDELLVAFETMVKPMRIGQLWCPAFNKCSFISSIAMARALLLAPRTSNRTMKCFEDLVAAIYTKSDFYYGEECEADDVQMDISSRDVPGYSFEPWSRTSGFEPPPICEACDMIMYQCPCFDFNALKKSCAERTFADDYVIEGLDGVVDNATLLSNLGPFLVPVKCQYENCPTPTLAIPPDLNRATDRVDINLVQSICDSTLPTHSNYDDSFHQVFVESADYSIDLDHVRLRQSDLIAKIPDSGHMIPVLNTGSGHKRVGTTKEVLTAIKKRNADVPELGDSVNLSRLSKAVAERFFISYINGNSLASSNFVNVVSNFHDYMEKWKSSGLSYDDLPDLHAENLQFYDHMIKSDVKPVVSDTLNIDRPVPATITYHKKSITSQFSPLFTALFERFQRCLRERIILPVGKISSLEMAGFDVKNKHCLEIDLSKFDKSQGEFHLLIQEHILNGLGCPAPITKWWCDFHRFSYIRDRRAGVGMPISFQRRTGDAFTYFGNTIVTMAEFAWCYDTDQFEKLLFSGDDSLGFSLLPPVGDPSKFTTLFNMEAKVMEPAVPYICSKFLLSDEFGNTFSVPDPLREVQRLGTKKIPYSDNDEFLFAHFMSFVDRLKFLDRMSQSCIDQLSIFFELKYKKSGEEAALMLGAFKKYTANFQSYKELYYSDRRQCELINSFCSTEFRVERVNSNKQRKKYGIERRCNDKRRTPTGSYGGGEEAETKISQAESTGTRSQKSQRESAFKSQTVPLPTVLSSRWFGTDRVEPPCERGGVTRA.

A RdRp catalytic domain is found at 511–624 (KHCLEIDLSK…FSLLPPVGDP (114 aa)). The interval 782 to 829 (RRCNDKRRTPTGSYGGGEEAETKISQAESTGTRSQKSQRESAFKSQTV) is disordered. Residues 804 to 816 (KISQAESTGTRSQ) are compositionally biased toward polar residues.

It belongs to the ssRNA positive-strand viruses RNA-directed RNA polymerase family. Interacts with replication protein 1a.

The catalysed reaction is RNA(n) + a ribonucleoside 5'-triphosphate = RNA(n+1) + diphosphate. Its function is as follows. RNA-dependent RNA polymerase which replicates the viral genome composed of 3 RNA segments, RNA1, RNA2 and RNA3. The protein is RNA-directed RNA polymerase 2a of Cucumis sativus (Cucumber).